The following is a 776-amino-acid chain: DNA topoisomerase 1 (776 aa).

Residues 1–111 (MKLVIVESPA…VKSDDFFKRV (111 aa)) enclose the Toprim domain. Mg(2+)-binding residues include glutamate 7 and aspartate 80. Residues 132–568 (DANLVNAQQA…FWSGFNHNIE (437 aa)) form the Topo IA-type catalytic domain. Residues 166 to 171 (SAGRVQ) are interaction with DNA. Residue tyrosine 304 is the O-(5'-phospho-DNA)-tyrosine intermediate of the active site. A C4-type zinc finger spans residues 600–627 (CPSCKTGELSLKLGKFGAFLACSNYPEC).

It belongs to the type IA topoisomerase family. As to quaternary structure, monomer. Mg(2+) serves as cofactor.

The enzyme catalyses ATP-independent breakage of single-stranded DNA, followed by passage and rejoining.. In terms of biological role, releases the supercoiling and torsional tension of DNA, which is introduced during the DNA replication and transcription, by transiently cleaving and rejoining one strand of the DNA duplex. Introduces a single-strand break via transesterification at a target site in duplex DNA. The scissile phosphodiester is attacked by the catalytic tyrosine of the enzyme, resulting in the formation of a DNA-(5'-phosphotyrosyl)-enzyme intermediate and the expulsion of a 3'-OH DNA strand. The free DNA strand then undergoes passage around the unbroken strand, thus removing DNA supercoils. Finally, in the religation step, the DNA 3'-OH attacks the covalent intermediate to expel the active-site tyrosine and restore the DNA phosphodiester backbone. The protein is DNA topoisomerase 1 of Rickettsia felis (strain ATCC VR-1525 / URRWXCal2) (Rickettsia azadi).